The sequence spans 423 residues: Proline racemase A (423 aa).

The signal sequence occupies residues 1–31 (MRKSVCPKQKFFFSAFPFFFFFCVFPLISRT). Cysteine 160 functions as the Proton acceptor in the catalytic mechanism. 161-162 (GH) contributes to the substrate binding site. 3 N-linked (GlcNAc...) asparagine glycosylation sites follow: asparagine 213, asparagine 266, and asparagine 282. Aspartate 326 contributes to the substrate binding site. The active-site Proton donor is the cysteine 330. Position 331 to 332 (331 to 332 (GT)) interacts with substrate.

It belongs to the proline racemase family. In terms of assembly, homodimer.

It localises to the secreted. It is found in the membrane. Its subcellular location is the cytoplasm. The catalysed reaction is L-proline = D-proline. With respect to regulation, inhibited by maleic acid, iodoacetamide, iodoacetate and, most particularly, pyrrole-2-carboxylic acid. Catalyzes the interconversion of L- and D-proline. Secreted isoform 1 contributes to parasite immune evasion by acting as a B-cell mitogen. Probably involved in parasite differentiation and infectivity. This Trypanosoma cruzi (strain CL Brener) protein is Proline racemase A (PA45-A).